A 102-amino-acid chain; its full sequence is Citrate lyase acyl carrier protein (102 aa).

O-(phosphoribosyl dephospho-coenzyme A)serine is present on serine 14.

It belongs to the CitD family. In terms of assembly, oligomer with a subunit composition of (alpha,beta,gamma)6.

It is found in the cytoplasm. Its function is as follows. Covalent carrier of the coenzyme of citrate lyase. The polypeptide is Citrate lyase acyl carrier protein (Serratia proteamaculans (strain 568)).